The sequence spans 404 residues: Probable tRNA sulfurtransferase (404 aa).

In terms of domain architecture, THUMP spans Arg-60–Asp-165. ATP is bound by residues Met-183 to Leu-184, His-208 to Phe-209, Arg-265, Gly-287, and Gln-296.

The protein belongs to the ThiI family.

It localises to the cytoplasm. The catalysed reaction is [ThiI sulfur-carrier protein]-S-sulfanyl-L-cysteine + a uridine in tRNA + 2 reduced [2Fe-2S]-[ferredoxin] + ATP + H(+) = [ThiI sulfur-carrier protein]-L-cysteine + a 4-thiouridine in tRNA + 2 oxidized [2Fe-2S]-[ferredoxin] + AMP + diphosphate. It catalyses the reaction [ThiS sulfur-carrier protein]-C-terminal Gly-Gly-AMP + S-sulfanyl-L-cysteinyl-[cysteine desulfurase] + AH2 = [ThiS sulfur-carrier protein]-C-terminal-Gly-aminoethanethioate + L-cysteinyl-[cysteine desulfurase] + A + AMP + 2 H(+). The protein operates within cofactor biosynthesis; thiamine diphosphate biosynthesis. Functionally, catalyzes the ATP-dependent transfer of a sulfur to tRNA to produce 4-thiouridine in position 8 of tRNAs, which functions as a near-UV photosensor. Also catalyzes the transfer of sulfur to the sulfur carrier protein ThiS, forming ThiS-thiocarboxylate. This is a step in the synthesis of thiazole, in the thiamine biosynthesis pathway. The sulfur is donated as persulfide by IscS. In Streptococcus equi subsp. equi (strain 4047), this protein is Probable tRNA sulfurtransferase.